Consider the following 214-residue polypeptide: ATP phosphoribosyltransferase (214 aa).

This sequence belongs to the ATP phosphoribosyltransferase family. Short subfamily. Heteromultimer composed of HisG and HisZ subunits.

It is found in the cytoplasm. It catalyses the reaction 1-(5-phospho-beta-D-ribosyl)-ATP + diphosphate = 5-phospho-alpha-D-ribose 1-diphosphate + ATP. It functions in the pathway amino-acid biosynthesis; L-histidine biosynthesis; L-histidine from 5-phospho-alpha-D-ribose 1-diphosphate: step 1/9. Its function is as follows. Catalyzes the condensation of ATP and 5-phosphoribose 1-diphosphate to form N'-(5'-phosphoribosyl)-ATP (PR-ATP). Has a crucial role in the pathway because the rate of histidine biosynthesis seems to be controlled primarily by regulation of HisG enzymatic activity. The chain is ATP phosphoribosyltransferase (hisG) from Nostoc sp. (strain PCC 7120 / SAG 25.82 / UTEX 2576).